Here is a 1102-residue protein sequence, read N- to C-terminus: Carbamoyl phosphate synthase large chain (1102 aa).

Residues 1-402 (MPKRTDLKSV…ALQKALRSLE (402 aa)) form a carboxyphosphate synthetic domain region. ATP contacts are provided by arginine 129, arginine 169, glycine 175, glycine 176, glutamate 208, isoleucine 210, glutamate 215, glycine 241, valine 242, histidine 243, glutamine 285, and glutamate 299. The 196-residue stretch at 133–328 (KGVVERCGAE…IAKIATKLSL (196 aa)) folds into the ATP-grasp 1 domain. Mg(2+) contacts are provided by glutamine 285, glutamate 299, and asparagine 301. Mn(2+)-binding residues include glutamine 285, glutamate 299, and asparagine 301. Positions 403-546 (QKGSQLDFSS…YHYSSYDEED (144 aa)) are oligomerization domain. The segment at 547–950 (EVGLHAKPSV…AFAKSQAAAN (404 aa)) is carbamoyl phosphate synthetic domain. An ATP-grasp 2 domain is found at 677–868 (ARVLDEAGLT…MAKAAALIGT (192 aa)). 10 residues coordinate ATP: arginine 713, arginine 752, leucine 754, glutamate 759, glycine 784, isoleucine 785, histidine 786, serine 787, glutamine 827, and glutamate 839. Residues glutamine 827, glutamate 839, and asparagine 841 each contribute to the Mg(2+) site. 3 residues coordinate Mn(2+): glutamine 827, glutamate 839, and asparagine 841. An MGS-like domain is found at 951-1096 (NALPTEGKIF…QEHAANLSAA (146 aa)). The interval 951–1102 (NALPTEGKIF…LSAAMEAANA (152 aa)) is allosteric domain.

The protein belongs to the CarB family. In terms of assembly, composed of two chains; the small (or glutamine) chain promotes the hydrolysis of glutamine to ammonia, which is used by the large (or ammonia) chain to synthesize carbamoyl phosphate. Tetramer of heterodimers (alpha,beta)4. Mg(2+) is required as a cofactor. Requires Mn(2+) as cofactor.

It carries out the reaction hydrogencarbonate + L-glutamine + 2 ATP + H2O = carbamoyl phosphate + L-glutamate + 2 ADP + phosphate + 2 H(+). It catalyses the reaction hydrogencarbonate + NH4(+) + 2 ATP = carbamoyl phosphate + 2 ADP + phosphate + 2 H(+). The protein operates within amino-acid biosynthesis; L-arginine biosynthesis; carbamoyl phosphate from bicarbonate: step 1/1. It functions in the pathway pyrimidine metabolism; UMP biosynthesis via de novo pathway; (S)-dihydroorotate from bicarbonate: step 1/3. Large subunit of the glutamine-dependent carbamoyl phosphate synthetase (CPSase). CPSase catalyzes the formation of carbamoyl phosphate from the ammonia moiety of glutamine, carbonate, and phosphate donated by ATP, constituting the first step of 2 biosynthetic pathways, one leading to arginine and/or urea and the other to pyrimidine nucleotides. The large subunit (synthetase) binds the substrates ammonia (free or transferred from glutamine from the small subunit), hydrogencarbonate and ATP and carries out an ATP-coupled ligase reaction, activating hydrogencarbonate by forming carboxy phosphate which reacts with ammonia to form carbamoyl phosphate. This chain is Carbamoyl phosphate synthase large chain, found in Paenarthrobacter aurescens (strain TC1).